The primary structure comprises 460 residues: Cysteine--tRNA ligase (460 aa).

Cys28 contributes to the Zn(2+) binding site. The short motif at 30 to 40 (MTVYDYCHLGH) is the 'HIGH' region element. Residues Cys209, His234, and Glu238 each contribute to the Zn(2+) site. Positions 266–270 (KMSKS) match the 'KMSKS' region motif. An ATP-binding site is contributed by Lys269.

This sequence belongs to the class-I aminoacyl-tRNA synthetase family. In terms of assembly, monomer. The cofactor is Zn(2+).

It localises to the cytoplasm. It catalyses the reaction tRNA(Cys) + L-cysteine + ATP = L-cysteinyl-tRNA(Cys) + AMP + diphosphate. This chain is Cysteine--tRNA ligase, found in Pseudomonas putida (strain ATCC 47054 / DSM 6125 / CFBP 8728 / NCIMB 11950 / KT2440).